The sequence spans 888 residues: MLSRLFRMHGLFVASHPWEVIVGTVTLTICMMSMNMFTGNNKICGWNYECPKLEEDVLSSDIIILTITRCIAILYIYFQFQNLRQLGSKYILGIAGLFTIFSSFVFSTVVIHFLDKELTGLNEALPFFLLLVDLSRASALAKFALSSNSQDEVRENIARGMAILGPTFTLDALVECLVIGVGTMSGVRQLEIMCCFGCMSVLANYFVFMTFFPACVSLVLELSRESREGRPIWQLSHFARVLEEEENKPNPVTQRVKMIMSLGLVLVHAHSRWIADPSPQNSTADNSKVSLGLDENVSKRIEPSVSLWQFYLSKMISMDIEQVITLSLALLLAVKYIFFEQAETESTLSLKNPITSPVVTQKKITDDCCRRDPVLVRNDQKFHAMEEETRKNRERKVEVIKPLLAENDTSHRATFVVGNSSLLGTSLELETQEPEMELPVEPRPNEECLQILENAEKGAKFLSDAEIIQLVNAKHIPAYKLETLMETHERGVSIRRQLLSKKLPEPSSLQYLPYRDYNYSLVMGACCENVIGYMPIPVGVAGPLCLDGKEFQVPMATTEGCLVASTNRGCRAIGLGGGASSRVLADGMTRGPVVRFPRACDSAEVKAWLETPEGFTVIKEAFDSTSRFARLQKLHMSVAGRNLYIRFQSRSGDAMGMNMISKGTEKALSKLQEYFPEMQILAVSGNYCTDKKPAAINWIEGRGKSVVCEAVIPAKVVREVLKTTTEAMIEVNINKNLVGSAMAGSIGGYNAHAANIVTAIYIACGQDAAQNVGSSNCITLMEASGPTNEDLYISCTMPSIEIGTVGGGTNLLPQQACLQMLGVQGACRDNPGENARQLARIVCGTVMAGELSLMAALAAGHLVRSHMIHNRSKINLQDLQGTCTKKAA.

Over 1-9 the chain is Cytoplasmic; sequence MLSRLFRMH. Residues 10-39 form a helical membrane-spanning segment; the sequence is GLFVASHPWEVIVGTVTLTICMMSMNMFTG. Over 40–56 the chain is Lumenal; sequence NNKICGWNYECPKLEED. Residues 57–78 traverse the membrane as a helical segment; it reads VLSSDIIILTITRCIAILYIYF. One can recognise an SSD domain in the interval 61-218; it reads DIIILTITRC…MTFFPACVSL (158 aa). The short motif at 75–78 is the INSIG-binding motif element; sequence YIYF. Topologically, residues 79–89 are cytoplasmic; the sequence is QFQNLRQLGSK. Lys89 is covalently cross-linked (Glycyl lysine isopeptide (Lys-Gly) (interchain with G-Cter in ubiquitin)). The helical transmembrane segment at 90 to 114 threads the bilayer; sequence YILGIAGLFTIFSSFVFSTVVIHFL. At 115-123 the chain is on the lumenal side; sequence DKELTGLNE. A helical transmembrane segment spans residues 124–149; the sequence is ALPFFLLLVDLSRASALAKFALSSNS. At 150 to 159 the chain is on the cytoplasmic side; sequence QDEVRENIAR. A helical membrane pass occupies residues 160–187; that stretch reads GMAILGPTFTLDALVECLVIGVGTMSGV. Residues 188-191 lie on the Lumenal side of the membrane; sequence RQLE. A helical transmembrane segment spans residues 192-220; the sequence is IMCCFGCMSVLANYFVFMTFFPACVSLVL. Residues 221 to 248 lie on the Cytoplasmic side of the membrane; it reads ELSRESREGRPIWQLSHFARVLEEEENK. Lys248 is covalently cross-linked (Glycyl lysine isopeptide (Lys-Gly) (interchain with G-Cter in ubiquitin)). Residues 249–275 traverse the membrane as a helical segment; sequence PNPVTQRVKMIMSLGLVLVHAHSRWIA. Topologically, residues 276–314 are lumenal; the sequence is DPSPQNSTADNSKVSLGLDENVSKRIEPSVSLWQFYLSK. Asn281 and Asn296 each carry an N-linked (GlcNAc...) asparagine glycan. The helical transmembrane segment at 315 to 339 threads the bilayer; that stretch reads MISMDIEQVITLSLALLLAVKYIFF. Topologically, residues 340–888 are cytoplasmic; it reads EQAETESTLS…LQGTCTKKAA (549 aa). Catalysis depends on charge relay system residues Glu559, Lys691, and Asp767. The active-site Proton donor is His866. At Ser872 the chain carries Phosphoserine; by AMPK.

It belongs to the HMG-CoA reductase family. As to quaternary structure, homotetramer. Homodimer. Interacts (via its SSD) with INSIG1; the interaction, accelerated by sterols, leads to the recruitment of HMGCR to AMFR/gp78 for its ubiquitination by the sterol-mediated ERAD pathway. Interacts with UBIAD1. Post-translationally, undergoes sterol-mediated ubiquitination and ER-associated degradation (ERAD). Accumulation of sterols in the endoplasmic reticulum (ER) membrane, triggers binding of the reductase to the ER membrane protein INSIG1 or INSIG2. The INSIG1 binding leads to the recruitment of the ubiquitin ligase, AMFR/gp78, RNF139 or RNF145, initiating ubiquitination of the reductase. The ubiquitinated reductase is then extracted from the ER membrane and delivered to cytosolic 26S proteosomes by a mechanism probably mediated by the ATPase Valosin-containing protein VCP/p97. The INSIG2-binding leads to the recruitment of the ubiquitin ligase RNF139, initiating ubiquitination of the reductase. Lys-248 is the main site of ubiquitination. Ubiquitination is enhanced by the presence of a geranylgeranylated protein. In terms of processing, N-glycosylated. Deglycosylated by NGLY1 on release from the endoplasmic reticulum (ER) in a sterol-mediated manner. Phosphorylated. Phosphorylation at Ser-872 reduces the catalytic activity.

Its subcellular location is the endoplasmic reticulum membrane. It localises to the peroxisome membrane. It carries out the reaction (R)-mevalonate + 2 NADP(+) + CoA = (3S)-3-hydroxy-3-methylglutaryl-CoA + 2 NADPH + 2 H(+). The protein operates within metabolic intermediate biosynthesis; (R)-mevalonate biosynthesis; (R)-mevalonate from acetyl-CoA: step 3/3. With respect to regulation, regulated by a negative feedback mechanism through sterols and non-sterol metabolites derived from mevalonate. Phosphorylation at Ser-872 down-regulates the catalytic activity. Functionally, catalyzes the conversion of (3S)-hydroxy-3-methylglutaryl-CoA (HMG-CoA) to mevalonic acid, the rate-limiting step in the synthesis of cholesterol and other isoprenoids, thus plays a critical role in cellular cholesterol homeostasis. The chain is 3-hydroxy-3-methylglutaryl-coenzyme A reductase (HMGCR) from Bos taurus (Bovine).